The following is a 208-amino-acid chain: Ribosomal RNA large subunit methyltransferase E (208 aa).

G63, W65, D83, D99, and D124 together coordinate S-adenosyl-L-methionine. Catalysis depends on K164, which acts as the Proton acceptor.

The protein belongs to the class I-like SAM-binding methyltransferase superfamily. RNA methyltransferase RlmE family.

The protein resides in the cytoplasm. It catalyses the reaction uridine(2552) in 23S rRNA + S-adenosyl-L-methionine = 2'-O-methyluridine(2552) in 23S rRNA + S-adenosyl-L-homocysteine + H(+). In terms of biological role, specifically methylates the uridine in position 2552 of 23S rRNA at the 2'-O position of the ribose in the fully assembled 50S ribosomal subunit. The protein is Ribosomal RNA large subunit methyltransferase E of Enterobacter sp. (strain 638).